A 294-amino-acid polypeptide reads, in one-letter code: Serine/threonine-protein kinase Aurora-1 (294 aa).

A Protein kinase domain is found at 31–282 (FDIGKPLGRG…LHKLLEHPWI (252 aa)). Residues 37-45 (LGRGKFGHV) and Lys-60 each bind ATP. Catalysis depends on Asp-154, which acts as the Proton acceptor. Position 176 is a phosphoserine (Ser-176). Thr-185 carries the post-translational modification Phosphothreonine.

Belongs to the protein kinase superfamily. Ser/Thr protein kinase family. Aurora subfamily. Interacts with TPX2. Post-translationally, phosphorylation at Thr-185 may regulate activity and degradation of AUR1 in a cell cycle dependent manner. In terms of tissue distribution, abundant in roots, flowers and flower buds, low or absent in expanded leaves, stems and siliques.

Its subcellular location is the nucleus membrane. It localises to the cytoplasm. It is found in the cytoskeleton. The protein resides in the spindle. The protein localises to the spindle pole. Its subcellular location is the phragmoplast. It catalyses the reaction L-seryl-[protein] + ATP = O-phospho-L-seryl-[protein] + ADP + H(+). It carries out the reaction L-threonyl-[protein] + ATP = O-phospho-L-threonyl-[protein] + ADP + H(+). Functionally, phosphorylates specifically 'Ser-10' of histone H3 in vitro and colocalizes with phosphorylated histone H3 during mitosis. Associates with cytoskeletal structures that are necessary for cytokinesis and with the microtubule spindle. Also colocalizes with gamma-tubulin and function in microtubule organizing centers (MTOCs). In contrast with the mammalian B-type Aurora, AUR1 has no kinase activity toward 'Ser-28' of histone H3. This is Serine/threonine-protein kinase Aurora-1 (AUR1) from Arabidopsis thaliana (Mouse-ear cress).